A 327-amino-acid polypeptide reads, in one-letter code: Putative HTH-type transcriptional regulatory protein Mbar_A2318 (327 aa).

In terms of domain architecture, HTH cro/C1-type spans 132-190 (LKKARMGQSMSLGTLASMVGVSRRTISKYEEEGMDASIDVVLQLEDIFGVELAKPINIL). A DNA-binding region (H-T-H motif) is located at residues 143-162 (LGTLASMVGVSRRTISKYEE).

The polypeptide is Putative HTH-type transcriptional regulatory protein Mbar_A2318 (Methanosarcina barkeri (strain Fusaro / DSM 804)).